The primary structure comprises 370 residues: Platelet-derived growth factor D (370 aa).

Residues Met1–Cys18 form the signal peptide. The 119-residue stretch at Arg52–Leu170 folds into the CUB domain. Cysteines 109 and 131 form a disulfide. Asn276 is a glycosylation site (N-linked (GlcNAc...) asparagine). Disulfide bonds link Cys302–Cys360 and Cys306–Cys362.

It belongs to the PDGF/VEGF growth factor family. In terms of assembly, homodimer; disulfide-linked. Interacts with PDGFRB homodimers, and with heterodimers formed by PDGFRA and PDGFRB. Activated by proteolytic cleavage. Proteolytic removal of the N-terminal CUB domain releasing the core domain is necessary for unmasking the receptor-binding epitopes of the core domain. Cleavage after Arg-247 or Arg-249 by urokinase plasminogen activator gives rise to the active form.

The protein localises to the secreted. In terms of biological role, growth factor that plays an essential role in the regulation of embryonic development, cell proliferation, cell migration, survival and chemotaxis. Potent mitogen for cells of mesenchymal origin. Plays an important role in wound healing. Induces macrophage recruitment, increased interstitial pressure, and blood vessel maturation during angiogenesis. Can initiate events that lead to a mesangial proliferative glomerulonephritis, including influx of monocytes and macrophages and production of extracellular matrix. The chain is Platelet-derived growth factor D (PDGFD) from Pongo abelii (Sumatran orangutan).